The primary structure comprises 105 residues: Fungal protease inhibitor-1 (105 aa).

The first 19 residues, 1-19, serve as a signal peptide directing secretion; sequence MKAVITLLFLACILVVTYG. 6 disulfides stabilise this stretch: Cys-23/Cys-56, Cys-28/Cys-58, Cys-33/Cys-59, Cys-42/Cys-62, Cys-72/Cys-93, and Cys-87/Cys-98.

Functionally, inhibits proteases from the fungi A.oryzae and R.oryzae, trypsin and chymotrypsin. Does not inhibit protease from the bacterium B.licheniformis or papain. This Antheraea mylitta (Tasar silkworm) protein is Fungal protease inhibitor-1.